The chain runs to 283 residues: ATP phosphoribosyltransferase (283 aa).

Belongs to the ATP phosphoribosyltransferase family. Long subfamily. It depends on Mg(2+) as a cofactor.

The protein resides in the cytoplasm. The enzyme catalyses 1-(5-phospho-beta-D-ribosyl)-ATP + diphosphate = 5-phospho-alpha-D-ribose 1-diphosphate + ATP. The protein operates within amino-acid biosynthesis; L-histidine biosynthesis; L-histidine from 5-phospho-alpha-D-ribose 1-diphosphate: step 1/9. Feedback inhibited by histidine. In terms of biological role, catalyzes the condensation of ATP and 5-phosphoribose 1-diphosphate to form N'-(5'-phosphoribosyl)-ATP (PR-ATP). Has a crucial role in the pathway because the rate of histidine biosynthesis seems to be controlled primarily by regulation of HisG enzymatic activity. This Methanopyrus kandleri (strain AV19 / DSM 6324 / JCM 9639 / NBRC 100938) protein is ATP phosphoribosyltransferase.